A 223-amino-acid chain; its full sequence is uncharacterized protein (223 aa).

This sequence to M.jannaschii MJ0575.

This is an uncharacterized protein from Methanocaldococcus jannaschii (strain ATCC 43067 / DSM 2661 / JAL-1 / JCM 10045 / NBRC 100440) (Methanococcus jannaschii).